The primary structure comprises 302 residues: Spermidine synthase (302 aa).

At M1 the chain carries N-acetylmethionine. One can recognise a PABS domain in the interval 18–253 (EGWFRETCSL…GQIGFMLCSK (236 aa)). An S-adenosyl 3-(methylsulfanyl)propylamine-binding site is contributed by Q49. Y79 is a binding site for putrescine. S-adenosyl 3-(methylsulfanyl)propylamine-binding positions include Q80, D104, E124, 155-156 (DG), and D173. Residue D173 is the Proton acceptor of the active site. Residues 173-176 (DSSD) and Y241 each bind putrescine.

This sequence belongs to the spermidine/spermine synthase family. As to quaternary structure, homodimer or homotetramer.

The enzyme catalyses S-adenosyl 3-(methylsulfanyl)propylamine + putrescine = S-methyl-5'-thioadenosine + spermidine + H(+). The protein operates within amine and polyamine biosynthesis; spermidine biosynthesis; spermidine from putrescine: step 1/1. The activity is thought to be regulated mainly by the availability of decarboxylated S-adenosylmethionine. Its function is as follows. Catalyzes the production of spermidine from putrescine and decarboxylated S-adenosylmethionine (dcSAM). Has a strong preference for putrescine as substrate, and has very low activity towards 1,3-diaminopropane. Has extremely low activity towards spermidine. In Homo sapiens (Human), this protein is Spermidine synthase (SRM).